We begin with the raw amino-acid sequence, 337 residues long: DNA-directed RNA polymerase subunit alpha (337 aa).

The tract at residues 1-233 is alpha N-terminal domain (alpha-NTD); sequence MIQKNWQELI…DQLSIFVNFE (233 aa). Residues 249–337 are alpha C-terminal domain (alpha-CTD); it reads FNPALLKKVD…DLAKRYEDQY (89 aa).

This sequence belongs to the RNA polymerase alpha chain family. As to quaternary structure, homodimer. The RNAP catalytic core consists of 2 alpha, 1 beta, 1 beta' and 1 omega subunit. When a sigma factor is associated with the core the holoenzyme is formed, which can initiate transcription.

The enzyme catalyses RNA(n) + a ribonucleoside 5'-triphosphate = RNA(n+1) + diphosphate. Functionally, DNA-dependent RNA polymerase catalyzes the transcription of DNA into RNA using the four ribonucleoside triphosphates as substrates. The chain is DNA-directed RNA polymerase subunit alpha from Brucella abortus (strain S19).